The chain runs to 477 residues: Protein U33 (477 aa).

Belongs to the herpesviridae UL49 family.

The sequence is that of Protein U33 (U33) from Homo sapiens (Human).